The following is a 395-amino-acid chain: Cystathionine beta-lyase (395 aa).

Position 210 is an N6-(pyridoxal phosphate)lysine (lysine 210).

This sequence belongs to the trans-sulfuration enzymes family. As to quaternary structure, homotetramer. It depends on pyridoxal 5'-phosphate as a cofactor.

It is found in the cytoplasm. The catalysed reaction is L,L-cystathionine + H2O = L-homocysteine + pyruvate + NH4(+). The enzyme catalyses an S-substituted L-cysteine + H2O = a thiol + pyruvate + NH4(+). It functions in the pathway amino-acid biosynthesis; L-methionine biosynthesis via de novo pathway; L-homocysteine from L-cystathionine: step 1/1. Functionally, catalyzes the cleavage of cystathionine to homocysteine, pyruvate and ammonia during methionine biosynthesis. The chain is Cystathionine beta-lyase (metC) from Salmonella typhimurium (strain LT2 / SGSC1412 / ATCC 700720).